We begin with the raw amino-acid sequence, 150 residues long: CASP-like protein 2 (150 aa).

Residues 1-17 (MKPEAGDGRSGWRWVAT) are Cytoplasmic-facing. A helical transmembrane segment spans residues 18–38 (FDLILRLAAIVATSTAVLAAM). Topologically, residues 39-41 (GKT) are extracellular. A helical membrane pass occupies residues 42 to 62 (FVVVVNGVACFYLLMSLPVSI). At 63 to 82 (FNIMRPGACPANRAVLTALD) the chain is on the cytoplasmic side. A helical membrane pass occupies residues 83 to 103 (MVTVALVTAGALVAGILYLVH). The Extracellular portion of the chain corresponds to 104–121 (KAGDTHADWFSIWSQLDS). Residues 122–142 (LSYLAVLALILHVLLSGSILY) traverse the membrane as a helical segment. The Cytoplasmic segment spans residues 143–150 (KQALNIMF).

It belongs to the Casparian strip membrane proteins (CASP) family. As to quaternary structure, homodimer and heterodimers.

The protein localises to the cell membrane. This is CASP-like protein 2 from Picea sitchensis (Sitka spruce).